A 573-amino-acid chain; its full sequence is MELPTPQKVQEPPKSFEEFLKSQNWDYWPRDVHIRDGDIWENTLRKLEEAVSYNSVYSYLWTNVPRLYEIVDSMESKLKECSHLLQQHASRLFESDRLISKKRTYTNLDRYKAFLKEHYRRKKIVLSDQMETEKNIEGCTFLLKQNELTQLPRHLDAKQIYLYVLRTHNLEEKVFKVWKTHILSDCSIALLHDCFWWWFLHKFKPDKRDQDWLFDRIAESYVTLFMRIPLRRKDIFFQMYPDWLAQAVYTTFQESFPESCSLFNDNFKEDLGNTIFLWLSGLKPAPGFWTHWKLQDLCTTTIHGCRRVPVKLRRGIMSSQEHTSATVGLKIEDILKNPRALPVLKEESAASKVTTKSHYRSLGPEFYKVLFDFGGQSPLILYYLKMHELGGISVTYNPKGSKFTKILREPPPAPTYCEIIKDAKRKFADNKKDFKRVKQRIKDDIKFLKEQQEQIDKELDRLQAKASKNLQEVKNDFENFLHKLRVEAKLKEEYRGSASPSESLQSLQSPNSSLSSPAMSEDFNSVEEGGLKEARSDHYLRTTHSSFSSINLIGGECTTKSTFCCSSLKSSHQ.

Positions 429 to 485 form a coiled coil; it reads DNKKDFKRVKQRIKDDIKFLKEQQEQIDKELDRLQAKASKNLQEVKNDFENFLHKLR. Residues 497–521 show a composition bias toward low complexity; it reads SASPSESLQSLQSPNSSLSSPAMSE. The segment at 497–528 is disordered; that stretch reads SASPSESLQSLQSPNSSLSSPAMSEDFNSVEE.

The protein belongs to the FAM227 family.

This Rattus norvegicus (Rat) protein is Protein FAM227B (Fam227b).